The chain runs to 690 residues: Elongation factor G (690 aa).

The tr-type G domain maps to 8 to 283; the sequence is EDYRNFGIMA…AVVDYLPSPV (276 aa). GTP-binding positions include 17–24, 81–85, and 135–138; these read AHIDAGKT, DTPGH, and NKMD.

The protein belongs to the TRAFAC class translation factor GTPase superfamily. Classic translation factor GTPase family. EF-G/EF-2 subfamily.

The protein resides in the cytoplasm. Its function is as follows. Catalyzes the GTP-dependent ribosomal translocation step during translation elongation. During this step, the ribosome changes from the pre-translocational (PRE) to the post-translocational (POST) state as the newly formed A-site-bound peptidyl-tRNA and P-site-bound deacylated tRNA move to the P and E sites, respectively. Catalyzes the coordinated movement of the two tRNA molecules, the mRNA and conformational changes in the ribosome. The chain is Elongation factor G from Rhodopseudomonas palustris (strain BisB18).